A 30-amino-acid chain; its full sequence is uncharacterized protein (30 aa).

This is an uncharacterized protein from Bacillus subtilis (strain 168).